The chain runs to 639 residues: Signal recognition particle receptor subunit alpha (639 aa).

The segment at 132-317 is disordered; the sequence is APTTMKKFED…STKPSATKGT (186 aa). Composition is skewed to basic and acidic residues over residues 137 to 146 and 153 to 165; these read KKFEDSEKAK and IETR…EKAK. Ser-178 is modified (phosphoserine). Residues 204–240 show a composition bias toward basic and acidic residues; the sequence is ELSKEEQIRRKREEFIQKHGRGMEKSSKSSKSDAPKE. Position 285 is a phosphothreonine (Thr-285). Ser-297, Ser-298, and Ser-299 each carry phosphoserine. The span at 305–315 shows a compositional bias: polar residues; sequence AQNSTKPSATK. Residues 420–637 form an NG domain region; it reads YVVTFCGVNG…NAKAVVAALM (218 aa). A GTP-binding site is contributed by 426–433; the sequence is GVNGVGKS. Residue Ser-474 is modified to Phosphoserine. 521-525 contributes to the GTP binding site; sequence DTAGR. Position 579 is a phosphothreonine (Thr-579). 589–592 contributes to the GTP binding site; sequence TKFD.

It belongs to the GTP-binding SRP family. Heterodimer with SRPRB. Interacts with the signal recognition particle (SRP) complex subunit SRP54.

The protein localises to the endoplasmic reticulum membrane. In terms of biological role, component of the SRP (signal recognition particle) receptor. Ensures, in conjunction with the signal recognition particle, the correct targeting of the nascent secretory proteins to the endoplasmic reticulum membrane system. Forms a guanosine 5'-triphosphate (GTP)-dependent complex with the SRP subunit SRP54. SRP receptor compaction and GTPase rearrangement drive SRP-mediated cotranslational protein translocation into the ER. This Bos taurus (Bovine) protein is Signal recognition particle receptor subunit alpha.